A 339-amino-acid chain; its full sequence is Ribosomal RNA small subunit methyltransferase H (339 aa).

S-adenosyl-L-methionine-binding positions include 36 to 38 (GGY), aspartate 55, phenylalanine 82, aspartate 103, and glutamine 110. A disordered region spans residues 286–319 (GPIGPSEAEATANPRARSAKLRAGERTDAPIPEP).

It belongs to the methyltransferase superfamily. RsmH family.

Its subcellular location is the cytoplasm. It catalyses the reaction cytidine(1402) in 16S rRNA + S-adenosyl-L-methionine = N(4)-methylcytidine(1402) in 16S rRNA + S-adenosyl-L-homocysteine + H(+). Its function is as follows. Specifically methylates the N4 position of cytidine in position 1402 (C1402) of 16S rRNA. The polypeptide is Ribosomal RNA small subunit methyltransferase H (Methylobacterium nodulans (strain LMG 21967 / CNCM I-2342 / ORS 2060)).